The chain runs to 275 residues: Large ribosomal subunit protein uL2 (275 aa).

Positions 224 to 275 are disordered; the sequence is VMNPVDHPHGGGEGKSPIGRPSPVTPWGKPTLGYKTRKKNKASDKFIIKRRK. A compositionally biased stretch (basic and acidic residues) spans 264–275; the sequence is KASDKFIIKRRK.

It belongs to the universal ribosomal protein uL2 family. In terms of assembly, part of the 50S ribosomal subunit. Forms a bridge to the 30S subunit in the 70S ribosome.

One of the primary rRNA binding proteins. Required for association of the 30S and 50S subunits to form the 70S ribosome, for tRNA binding and peptide bond formation. It has been suggested to have peptidyltransferase activity; this is somewhat controversial. Makes several contacts with the 16S rRNA in the 70S ribosome. The chain is Large ribosomal subunit protein uL2 from Acetivibrio thermocellus (strain ATCC 27405 / DSM 1237 / JCM 9322 / NBRC 103400 / NCIMB 10682 / NRRL B-4536 / VPI 7372) (Clostridium thermocellum).